The sequence spans 59 residues: Chromatin protein Cren7 (59 aa).

The protein belongs to the Cren7 family. As to quaternary structure, monomer. Post-translationally, methylated at multiple sites, to varying extents.

It is found in the chromosome. It localises to the cytoplasm. Its function is as follows. A chromatin protein, binds double-stranded DNA without sequence specificity. Constrains negative DNA supercoils. This is Chromatin protein Cren7 from Sulfolobus acidocaldarius (strain ATCC 33909 / DSM 639 / JCM 8929 / NBRC 15157 / NCIMB 11770).